A 581-amino-acid chain; its full sequence is Arginine--tRNA ligase (581 aa).

The short motif at 126–136 (PNLAKEMHVGH) is the 'HIGH' region element.

It belongs to the class-I aminoacyl-tRNA synthetase family. In terms of assembly, monomer.

The protein resides in the cytoplasm. It catalyses the reaction tRNA(Arg) + L-arginine + ATP = L-arginyl-tRNA(Arg) + AMP + diphosphate. This chain is Arginine--tRNA ligase, found in Shewanella sediminis (strain HAW-EB3).